Consider the following 376-residue polypeptide: Putative transcription factor egl-18 (376 aa).

Disordered regions lie at residues 1–33 (MSIS…CSGC), 65–122 (NNEL…LPDF), 148–197 (MVQQ…SDIP), and 240–264 (ATPS…PNAA). Residues 9-27 (TRPESAEQQHHEVLQRPSD) show a composition bias toward basic and acidic residues. 2 stretches are compositionally biased toward low complexity: residues 68-89 (LKSS…RSSP) and 165-175 (QQSVSPPQSKS). Positions 176 to 195 (VKIEDPMDQDVKQEESERSD) are enriched in basic and acidic residues. The segment covering 241 to 250 (TPSSQSQDSS) has biased composition (polar residues). Residues 266–290 (CSNCRTDKTTAWRRDAEGKLVCNPC) form a GATA-type zinc finger.

Expressed in differentiated seam cells. Expressed in the head and trunk.

The protein resides in the nucleus. Functionally, probable transcription factor. Involved in embryonic development and in vulval development in larvae, acting redundantly, at least in part, with elt-6. Perhaps acting together with elt-6, may form a positive feedback loop to initiate and maintain lin-39 gene expression to ensure proper vulval precursor cell (VPC) fate specification. Together with elt-6, acts as a downstream target of the Wnt/beta-catenin asymmetry pathway, required to adopt or maintain the seam cell fate. Required in seam cells, acting redundantly with elt-6, to promote production of alae, expression of several seam-specific genes and maintenance of seam cells in an unfused state. Plays a role in longevity. May form a transcriptional circuit with GATA factors elt-3 and elt-6. The chain is Putative transcription factor egl-18 from Caenorhabditis elegans.